Consider the following 506-residue polypeptide: Phase 2 flagellin (506 aa).

The protein belongs to the bacterial flagellin family.

The protein resides in the secreted. Its subcellular location is the bacterial flagellum. Its function is as follows. Flagellin is the subunit protein which polymerizes to form the filaments of bacterial flagella. This is Phase 2 flagellin (fljB) from Salmonella typhimurium (strain LT2 / SGSC1412 / ATCC 700720).